The sequence spans 513 residues: Na(+)/H(+) antiporter NhaB (513 aa).

11 helical membrane passes run 23-43 (LALI…PFVA), 52-72 (IFTL…LLAI), 97-117 (LLLM…LFIF), 144-164 (FLDA…FYGI), 202-222 (LMMH…VGEP), 238-258 (FFLR…LTCL), 303-323 (AIIG…VGLI), 348-368 (TESL…AVII), 391-411 (LFYI…VGTI), 447-467 (ATPN…APLI), and 475-495 (VWMA…CVEF).

Belongs to the NhaB Na(+)/H(+) (TC 2.A.34) antiporter family.

The protein localises to the cell inner membrane. It catalyses the reaction 2 Na(+)(in) + 3 H(+)(out) = 2 Na(+)(out) + 3 H(+)(in). Its function is as follows. Na(+)/H(+) antiporter that extrudes sodium in exchange for external protons. The polypeptide is Na(+)/H(+) antiporter NhaB (Escherichia coli (strain SMS-3-5 / SECEC)).